We begin with the raw amino-acid sequence, 178 residues long: S-alkylcysteine N-acetyltransferase (178 aa).

Residues 4–163 enclose the N-acetyltransferase domain; it reads DIFRLATVED…IGVMMHKVLI (160 aa).

It belongs to the acetyltransferase family.

The catalysed reaction is an S-substituted L-cysteine + acetyl-CoA = an N-acetyl-L-cysteine-S-conjugate + CoA + H(+). It catalyses the reaction S-benzyl-L-cysteine + acetyl-CoA = N-acetyl-S-benzyl-L-cysteine + CoA + H(+). It carries out the reaction S-methyl-L-cysteine + acetyl-CoA = N-acetyl-S-methyl-L-cysteine + CoA + H(+). The protein operates within amino-acid metabolism. In terms of biological role, involved in a cysteine salvage pathway from S-alkylcysteine. Catalyzes the first step in this pathway, i.e. the amine acetylation of an S-alkylcysteine with a preference for S-benzyl-L-cysteine over S-methyl-L-cysteine. This pathway is likely important in the catabolism of alkylated cysteine generated by proteolysis of alkylated glutathione formed in the detoxification of a wide range of electrophiles. The polypeptide is S-alkylcysteine N-acetyltransferase (Bacillus subtilis (strain 168)).